The primary structure comprises 219 residues: Mediator of RNA polymerase II transcription subunit 20b (219 aa).

It belongs to the Mediator complex subunit 20 family. In terms of assembly, component of the Mediator complex.

Its subcellular location is the nucleus. Functionally, component of the Mediator complex, a coactivator involved in the regulated transcription of nearly all RNA polymerase II-dependent genes. Mediator functions as a bridge to convey information from gene-specific regulatory proteins to the basal RNA polymerase II transcription machinery. The Mediator complex, having a compact conformation in its free form, is recruited to promoters by direct interactions with regulatory proteins and serves for the assembly of a functional preinitiation complex with RNA polymerase II and the general transcription factors. This Arabidopsis thaliana (Mouse-ear cress) protein is Mediator of RNA polymerase II transcription subunit 20b (MED20B).